The primary structure comprises 382 residues: Neuropeptide Y receptor type 1 (382 aa).

Residues 1–33 (MNSTLFSRVENYSVHYNVSENSPFLAFENDDCH) lie on the Extracellular side of the membrane. N2, N11, and N17 each carry an N-linked (GlcNAc...) asparagine glycan. A helical membrane pass occupies residues 34–54 (LPLAVIFTLALAYGAVIILGV). Over 55-75 (SGNLALIIIILKQKEMRNVTN) the chain is Cytoplasmic. The helical transmembrane segment at 76 to 96 (ILIVNLSFSDLLVAVMCLPFT) threads the bilayer. Over 97–115 (FVYTLMDHWVFGETMCKLN) the chain is Extracellular. A disulfide bond links C112 and C197. Residues 116–136 (PFVQCVSITVSIFSLVLIAVE) form a helical membrane-spanning segment. Topologically, residues 137–153 (RHQLIINPRGWRPNNRH) are cytoplasmic. Residues 154–174 (AYIGITVIWVLAVASSLPFVI) form a helical membrane-spanning segment. At 175–210 (YQILTDEPFQNVSLAAFKDKYVCFDKFPSDSHRLSY) the chain is on the extracellular side. Residues 211–231 (TTLLLVLQYFGPLCFIFICYF) traverse the membrane as a helical segment. The Cytoplasmic portion of the chain corresponds to 232 to 259 (KIYIRLKRRNNMMDKIRDSKYRSSETKR). A helical membrane pass occupies residues 260–280 (INVMLLSIVVAFAVCWLPLTI). The Extracellular portion of the chain corresponds to 281–298 (FNTVFDWNHQIIATCNHN). The helical transmembrane segment at 299–319 (LLFLLCHLTAMISTCVNPIFY) threads the bilayer. Topologically, residues 320–382 (GFLNKNFQRD…KISMNDNEKI (63 aa)) are cytoplasmic. C337 carries the S-palmitoyl cysteine lipid modification. Phosphoserine is present on residues S367 and S375.

The protein belongs to the G-protein coupled receptor 1 family. As to expression, brain.

It is found in the cell membrane. Functionally, receptor for neuropeptide Y and peptide YY. The sequence is that of Neuropeptide Y receptor type 1 (Npy1r) from Rattus norvegicus (Rat).